A 345-amino-acid polypeptide reads, in one-letter code: N-acetyl-gamma-glutamyl-phosphate reductase (345 aa).

Residue Cys-153 is part of the active site.

The protein belongs to the NAGSA dehydrogenase family. Type 1 subfamily.

The protein resides in the cytoplasm. It catalyses the reaction N-acetyl-L-glutamate 5-semialdehyde + phosphate + NADP(+) = N-acetyl-L-glutamyl 5-phosphate + NADPH + H(+). It participates in amino-acid biosynthesis; L-arginine biosynthesis; N(2)-acetyl-L-ornithine from L-glutamate: step 3/4. Catalyzes the NADPH-dependent reduction of N-acetyl-5-glutamyl phosphate to yield N-acetyl-L-glutamate 5-semialdehyde. The polypeptide is N-acetyl-gamma-glutamyl-phosphate reductase (Methylacidiphilum infernorum (isolate V4) (Methylokorus infernorum (strain V4))).